The chain runs to 299 residues: ATP phosphoribosyltransferase (299 aa).

Belongs to the ATP phosphoribosyltransferase family. Long subfamily. Requires Mg(2+) as cofactor.

It is found in the cytoplasm. It catalyses the reaction 1-(5-phospho-beta-D-ribosyl)-ATP + diphosphate = 5-phospho-alpha-D-ribose 1-diphosphate + ATP. Its pathway is amino-acid biosynthesis; L-histidine biosynthesis; L-histidine from 5-phospho-alpha-D-ribose 1-diphosphate: step 1/9. With respect to regulation, feedback inhibited by histidine. In terms of biological role, catalyzes the condensation of ATP and 5-phosphoribose 1-diphosphate to form N'-(5'-phosphoribosyl)-ATP (PR-ATP). Has a crucial role in the pathway because the rate of histidine biosynthesis seems to be controlled primarily by regulation of HisG enzymatic activity. The sequence is that of ATP phosphoribosyltransferase from Campylobacter jejuni subsp. jejuni serotype O:23/36 (strain 81-176).